The following is a 1403-amino-acid chain: Eukaryotic translation initiation factor 4 gamma (1403 aa).

3 stretches are compositionally biased toward polar residues: residues 1–11 (MSSKPPSNTPK), 19–39 (ASSQSNKSNSTKASENNTATA), and 50–60 (EPTNTSRANAQ). 4 disordered regions span residues 1–381 (MSSK…GSTP), 439–464 (SRSGSQVSDQVVESPNSSTLSPRNGF), 488–774 (VVVP…KRDL), and 861–1003 (AFSD…EALL). The residue at position 83 (Ser83) is a Phosphoserine. Residues 109-137 (DNTSKPSANSSAERTSSQHQKPETSSQIG) show a composition bias toward polar residues. Low complexity-rich tracts occupy residues 190–208 (SGVSSYSSKSQSVNSSVTS) and 231–248 (PRPTTSASNTNTSPANGA). Over residues 249–269 (PTNKPSTDINTTDPATQTTQV) the composition is skewed to polar residues. The span at 270–291 (SASNSPALSGSSTPSNTSSRSN) shows a compositional bias: low complexity. Residues 298–308 (FSEKRHYDRYG) show a composition bias toward basic and acidic residues. A compositionally biased stretch (low complexity) spans 325–334 (NYNNSGNNRN). Polar residues-rich tracts occupy residues 346–381 (RNYNNQGAYPTYMSNGRSANQSPRNNPQNVNNGSTP), 439–460 (SRSGSQVSDQVVESPNSSTLSP), and 493–508 (KNASSPNPSETNSRAE). Phosphoserine is present on residues Ser452, Ser455, Ser456, and Ser459. Basic and acidic residues predominate over residues 537–714 (IQEKAEAEAK…GKREADKNPE (178 aa)). A compositionally biased stretch (polar residues) spans 720–737 (PLASSEANVDTSKQTNAT). The span at 741 to 754 (VVDKTKVEKLKASE) shows a compositional bias: basic and acidic residues. Over residues 757–768 (STSSLSSPSHST) the composition is skewed to low complexity. Ser866 and Ser882 each carry phosphoserine. The span at 868–886 (RGMYSSSRQSSRSGSNTHS) shows a compositional bias: low complexity. The residue at position 884 (Thr884) is a Phosphothreonine. Residues Ser886, Ser911, Ser919, and Ser921 each carry the phosphoserine modification. Residue Tyr923 is modified to Phosphotyrosine. The segment covering 986–995 (KLTEKPAETK) has biased composition (basic and acidic residues). The 237-residue stretch at 1009–1245 (QRKVKGSLNK…MDVMDSRKNG (237 aa)) folds into the MIF4G domain. The segment at 1266-1403 (AERKKALAES…QKDSNSKTSS (138 aa)) is disordered. A compositionally biased stretch (basic and acidic residues) spans 1284-1295 (HGRDMNRGDSRM). Composition is skewed to polar residues over residues 1302-1313 (PPFSSSDWSNNK), 1328-1341 (SGTQGSHGPTSLSS), and 1348-1358 (VSRTPSRQNSA). Ser1333 carries the post-translational modification Phosphoserine. Basic and acidic residues predominate over residues 1383-1403 (LEEHDHDNDGGQKDSNSKTSS).

The protein belongs to the eukaryotic initiation factor 4G family.

It localises to the cytoplasm. The protein localises to the perinuclear region. Its function is as follows. Component of the protein complex eIF4F, which is involved in the recognition of the mRNA cap, ATP-dependent unwinding of 5'-terminal secondary structure and recruitment of mRNA to the ribosome. The sequence is that of Eukaryotic translation initiation factor 4 gamma (tif471) from Schizosaccharomyces pombe (strain 972 / ATCC 24843) (Fission yeast).